We begin with the raw amino-acid sequence, 103 residues long: Cyanovirin-N homolog (103 aa).

It belongs to the cyanovirin-N family.

Its function is as follows. Mannose-binding lectin. The protein is Cyanovirin-N homolog of Tuber borchii (White truffle).